The chain runs to 354 residues: 3-dehydroquinate synthase (354 aa).

NAD(+) contacts are provided by residues 100–104 (GATGD), 124–125 (TT), Lys136, Lys145, and 163–166 (FLAT). Residues Glu178, His242, and His256 each coordinate Zn(2+).

It belongs to the sugar phosphate cyclases superfamily. Dehydroquinate synthase family. It depends on Co(2+) as a cofactor. Requires Zn(2+) as cofactor. NAD(+) is required as a cofactor.

It is found in the cytoplasm. It catalyses the reaction 7-phospho-2-dehydro-3-deoxy-D-arabino-heptonate = 3-dehydroquinate + phosphate. Its pathway is metabolic intermediate biosynthesis; chorismate biosynthesis; chorismate from D-erythrose 4-phosphate and phosphoenolpyruvate: step 2/7. Its function is as follows. Catalyzes the conversion of 3-deoxy-D-arabino-heptulosonate 7-phosphate (DAHP) to dehydroquinate (DHQ). This is 3-dehydroquinate synthase from Staphylococcus haemolyticus (strain JCSC1435).